The chain runs to 415 residues: Stimulator of interferon genes protein (415 aa).

The region spanning 29–163 is the TIR domain; the sequence is HVYHAFISYC…DIIQAISKPE (135 aa). Residue Glu104 is part of the active site. Arg256 contacts 2',3'-cGAMP. The segment at 387 to 415 is disordered; the sequence is KSPSSTNMVKSEPNIYREESGKTKSVERG. The span at 401 to 415 shows a compositional bias: basic and acidic residues; it reads IYREESGKTKSVERG.

It in the N-terminal section; belongs to the Toll-like receptor family. The protein in the C-terminal section; belongs to the TMEM173 family. In terms of assembly, homodimer.

The enzyme catalyses NAD(+) + H2O = ADP-D-ribose + nicotinamide + H(+). In terms of biological role, sensor of cytosolic DNA from bacteria and viruses that promotes autophagy. Binds c-di-AMP, 2'3'-cGAMP, 3'3'-cGAMP and to a lesser extent c-di-GMP. Nucleotide binding has not been seen to stimulate NAD(+) hydrolase activity. This chain is Stimulator of interferon genes protein, found in Magallana gigas (Pacific oyster).